The following is a 120-amino-acid chain: MYKNIKKFKLESFIAQEIGNLIVSRGIKDPRIHSFLTVVKVEFSKDLINAKVFMGSIKEGASLDNAVKALNNAKGFIQSQIIKRIKVRSTPKLLFVKDDSLSKSFYVNKIIEGLNTTREN.

This sequence belongs to the RbfA family. As to quaternary structure, monomer. Binds 30S ribosomal subunits, but not 50S ribosomal subunits or 70S ribosomes.

It localises to the cytoplasm. Its function is as follows. One of several proteins that assist in the late maturation steps of the functional core of the 30S ribosomal subunit. Associates with free 30S ribosomal subunits (but not with 30S subunits that are part of 70S ribosomes or polysomes). Required for efficient processing of 16S rRNA. May interact with the 5'-terminal helix region of 16S rRNA. This Borrelia garinii subsp. bavariensis (strain ATCC BAA-2496 / DSM 23469 / PBi) (Borreliella bavariensis) protein is Ribosome-binding factor A.